Here is a 258-residue protein sequence, read N- to C-terminus: Ribosomal RNA small subunit methyltransferase A (258 aa).

Residues asparagine 12, leucine 14, glycine 38, glutamate 59, aspartate 83, and asparagine 100 each contribute to the S-adenosyl-L-methionine site.

This sequence belongs to the class I-like SAM-binding methyltransferase superfamily. rRNA adenine N(6)-methyltransferase family. RsmA subfamily.

Its subcellular location is the cytoplasm. The enzyme catalyses adenosine(1518)/adenosine(1519) in 16S rRNA + 4 S-adenosyl-L-methionine = N(6)-dimethyladenosine(1518)/N(6)-dimethyladenosine(1519) in 16S rRNA + 4 S-adenosyl-L-homocysteine + 4 H(+). In terms of biological role, specifically dimethylates two adjacent adenosines (A1518 and A1519) in the loop of a conserved hairpin near the 3'-end of 16S rRNA in the 30S particle. May play a critical role in biogenesis of 30S subunits. The sequence is that of Ribosomal RNA small subunit methyltransferase A from Metamycoplasma arthritidis (strain 158L3-1) (Mycoplasma arthritidis).